The sequence spans 396 residues: Elongation factor Tu (396 aa).

Residues 10–206 enclose the tr-type G domain; it reads KPHINVGTIG…QMDAYIPEPQ (197 aa). Positions 19–26 are G1; it reads GHVDHGKT. 19–26 is a GTP binding site; the sequence is GHVDHGKT. Mg(2+) is bound at residue T26. The G2 stretch occupies residues 60–64; it reads GITIA. Residues 81 to 84 form a G3 region; the sequence is DCPG. Residues 81–85 and 136–139 contribute to the GTP site; these read DCPGH and NKAD. The segment at 136 to 139 is G4; it reads NKAD. Residues 174–176 form a G5 region; it reads SAL.

The protein belongs to the TRAFAC class translation factor GTPase superfamily. Classic translation factor GTPase family. EF-Tu/EF-1A subfamily. Monomer.

It localises to the cytoplasm. The enzyme catalyses GTP + H2O = GDP + phosphate + H(+). GTP hydrolase that promotes the GTP-dependent binding of aminoacyl-tRNA to the A-site of ribosomes during protein biosynthesis. The sequence is that of Elongation factor Tu from Nitrosococcus oceani (strain ATCC 19707 / BCRC 17464 / JCM 30415 / NCIMB 11848 / C-107).